We begin with the raw amino-acid sequence, 576 residues long: V-type ATP synthase alpha chain (576 aa).

Residue 238 to 245 (GPFGAGKT) coordinates ATP.

It belongs to the ATPase alpha/beta chains family.

The catalysed reaction is ATP + H2O + 4 H(+)(in) = ADP + phosphate + 5 H(+)(out). In terms of biological role, produces ATP from ADP in the presence of a proton gradient across the membrane. The V-type alpha chain is a catalytic subunit. In Borrelia duttonii (strain Ly), this protein is V-type ATP synthase alpha chain.